The primary structure comprises 230 residues: DNA ADP-ribosyl transferase (230 aa).

Residues tryptophan 26 to tyrosine 230 form the DarT domain. Residues histidine 30 to threonine 32, glycine 39, leucine 47, and arginine 67 contribute to the NAD(+) site. Arginine 67 functions as the Proton acceptor in the catalytic mechanism. Residue glutamate 183 is part of the active site.

The protein belongs to the DarT ADP-ribosyltransferase family. In terms of assembly, interacts with cognate antitoxin DarG (via C-terminus); this heterodimeric complex neutralizes the toxic effect of DarT by preventing ssDNA binding to DarT and consequently inactivating the toxin by direct protein-protein interactions.

It catalyses the reaction a thymidine in DNA + NAD(+) = an N-(ADP-alpha-D-ribosyl)-thymidine in DNA + nicotinamide + H(+). Functionally, toxic component of the hybrid type II/IV toxin-antitoxin (TA) system DarTG, which plays a crucial role in controlling bacterial growth and bacteriophage infection. ADP-ribosylates ssDNA, preferentially in the motif TTTW. In case of phage infection, DarT toxin ADP-ribosylates DNA, which inhibits both viral DNA and RNA synthesis and leads to abortive infection. Its toxic effect is neutralized by cognate antitoxin DarG. This Mycobacterium bovis (strain BCG / Pasteur 1173P2) protein is DNA ADP-ribosyl transferase.